We begin with the raw amino-acid sequence, 502 residues long: NADH-quinone oxidoreductase subunit N (502 aa).

Transmembrane regions (helical) follow at residues 16-36 (TLVP…IDLF), 47-67 (MLSL…AGVF), 85-105 (LAIL…PLAL), 113-133 (FSYP…QFMV), 138-158 (LILI…LIAM), 172-192 (FTMG…FYAL), 213-233 (IGFV…KLSM), 248-268 (SAAL…IVAM), 273-293 (FLIH…VVVT), 310-330 (MLAY…LIGT), 337-357 (LFLY…MLWI), 387-407 (ASIM…ALFW), 410-430 (MYLM…IMAL), and 470-490 (TIIG…NQLI).

Belongs to the complex I subunit 2 family. As to quaternary structure, NDH-1 is composed of 14 different subunits. Subunits NuoA, H, J, K, L, M, N constitute the membrane sector of the complex.

Its subcellular location is the cell inner membrane. It catalyses the reaction a quinone + NADH + 5 H(+)(in) = a quinol + NAD(+) + 4 H(+)(out). In terms of biological role, NDH-1 shuttles electrons from NADH, via FMN and iron-sulfur (Fe-S) centers, to quinones in the respiratory chain. The immediate electron acceptor for the enzyme in this species is believed to be ubiquinone. Couples the redox reaction to proton translocation (for every two electrons transferred, four hydrogen ions are translocated across the cytoplasmic membrane), and thus conserves the redox energy in a proton gradient. The chain is NADH-quinone oxidoreductase subunit N from Sulfurimonas denitrificans (strain ATCC 33889 / DSM 1251) (Thiomicrospira denitrificans (strain ATCC 33889 / DSM 1251)).